A 96-amino-acid chain; its full sequence is uncharacterized protein (96 aa).

Essential for virus function. This is an uncharacterized protein from Saccharolobus solfataricus (Sulfolobus solfataricus).